A 673-amino-acid chain; its full sequence is RAS guanyl-releasing protein 4 (673 aa).

2 stretches are compositionally biased toward basic residues: residues 1–10 and 20–32; these read MNRKDSKRKS and GRGR…RHKT. 2 disordered regions span residues 1 to 34 and 162 to 188; these read MNRK…KTCP and QSLG…PGLG. In terms of domain architecture, N-terminal Ras-GEF spans 49 to 172; sequence GMLNEGGCSE…SLGDFSSRLS (124 aa). Residues 201–432 enclose the Ras-GEF domain; the sequence is ETGELAEHLT…YELSYAREPR (232 aa). The EF-hand domain occupies 466–501; the sequence is HVEQLVESVFKNYDPDGRGTISQEDFERLSGNFPFA. The segment at 540–590 adopts a Phorbol-ester/DAG-type zinc-finger fold; that stretch reads LHTFQEVTFRKPTFCNSCSGFLWGVTKQGYRCRDCGLCCHRHCRDQVKVEC. Disordered stretches follow at residues 593 to 618 and 638 to 673; these read RPGA…ASCG and RHAW…KLNS. Residues 603–612 show a composition bias toward pro residues; it reads PEAPVPPTPV.

Belongs to the RASGRP family.

It localises to the cytoplasm. The protein localises to the cell membrane. In terms of biological role, functions as a cation- and diacylglycerol (DAG)-regulated nucleotide exchange factor activating Ras through the exchange of bound GDP for GTP. In neutrophils, participates in a phospholipase C-activating N-formyl peptide-activated GPCR (G protein-coupled receptor) signaling pathway by promoting Ras-mediated activation of PIK3CG/PI3Kgamma to promote neutrophil functional responses. In CD117(+) dendritic cells and mast cells, participates in an lipopolysaccharide (LPS)-activated signaling pathway that stimulates the production of interferon-gamma and other pro-inflammatory cytokines by natural killer (NK) cells. May function in mast cell differentiation. Does not appear to be required for the development of B-cells, DC-cells, T-cells, or NK-cells. This is RAS guanyl-releasing protein 4 (RASGRP4) from Bos taurus (Bovine).